Consider the following 235-residue polypeptide: 7-carboxy-7-deazaguanine synthase (235 aa).

Residues 25–27 and R40 each bind substrate; that span reads IQG. The Radical SAM core domain occupies 31 to 235; it reads FTGTYSVFVR…PRLHLLVQLP (205 aa). [4Fe-4S] cluster-binding residues include C44, C48, and C51. T53 serves as a coordination point for Mg(2+). Substrate is bound at residue T85. Residues G87 and 135–137 contribute to the S-adenosyl-L-methionine site; that span reads SPK. Residue P235 participates in substrate binding.

This sequence belongs to the radical SAM superfamily. 7-carboxy-7-deazaguanine synthase family. As to quaternary structure, homodimer. [4Fe-4S] cluster is required as a cofactor. Requires S-adenosyl-L-methionine as cofactor. The cofactor is Mg(2+).

It catalyses the reaction 6-carboxy-5,6,7,8-tetrahydropterin + H(+) = 7-carboxy-7-deazaguanine + NH4(+). The protein operates within purine metabolism; 7-cyano-7-deazaguanine biosynthesis. Functionally, catalyzes the complex heterocyclic radical-mediated conversion of 6-carboxy-5,6,7,8-tetrahydropterin (CPH4) to 7-carboxy-7-deazaguanine (CDG), a step common to the biosynthetic pathways of all 7-deazapurine-containing compounds. This is 7-carboxy-7-deazaguanine synthase from Hyperthermus butylicus (strain DSM 5456 / JCM 9403 / PLM1-5).